Consider the following 608-residue polypeptide: UvrABC system protein C (608 aa).

A GIY-YIG domain is found at 15–93 (HQPGVYRMYN…IKQYLPKYNV (79 aa)). Residues 203–238 (RQVIQTLVKQMESASQSLNFEKAAIIRDQIQAMRRV) enclose the UVR domain.

Belongs to the UvrC family. As to quaternary structure, interacts with UvrB in an incision complex.

The protein resides in the cytoplasm. The UvrABC repair system catalyzes the recognition and processing of DNA lesions. UvrC both incises the 5' and 3' sides of the lesion. The N-terminal half is responsible for the 3' incision and the C-terminal half is responsible for the 5' incision. The chain is UvrABC system protein C from Aliivibrio fischeri (strain ATCC 700601 / ES114) (Vibrio fischeri).